The following is a 269-amino-acid chain: Small ribosomal subunit protein uS3 (269 aa).

Positions 38–106 constitute a KH type-2 domain; that stretch reads IREWLHKNLE…QIQLNILEVK (69 aa). The interval 215–269 is disordered; the sequence is AQKAARQAAQGGRGGRGGNRRGRGDRPDRRGGRRRAEAAKQSAETPAPQTENAGA. A compositionally biased stretch (basic and acidic residues) spans 236–252; it reads GRGDRPDRRGGRRRAEA. Polar residues predominate over residues 256 to 269; sequence SAETPAPQTENAGA.

It belongs to the universal ribosomal protein uS3 family. As to quaternary structure, part of the 30S ribosomal subunit. Forms a tight complex with proteins S10 and S14.

Binds the lower part of the 30S subunit head. Binds mRNA in the 70S ribosome, positioning it for translation. The chain is Small ribosomal subunit protein uS3 from Cutibacterium acnes (strain DSM 16379 / KPA171202) (Propionibacterium acnes).